A 372-amino-acid chain; its full sequence is uncharacterized protein (372 aa).

Residues 49 to 72 (FSHKGGGKGGGSGAGSNDGGCSGE) form a disordered region. A compositionally biased stretch (gly residues) spans 55 to 70 (GKGGGSGAGSNDGGCS).

This is an uncharacterized protein from Halorubrum lacusprofundi (strain ATCC 49239 / DSM 5036 / JCM 8891 / ACAM 34).